The following is a 445-amino-acid chain: Phosphoglucosamine mutase (445 aa).

Serine 102 (phosphoserine intermediate) is an active-site residue. Residues serine 102, aspartate 241, aspartate 243, and aspartate 245 each coordinate Mg(2+). At serine 102 the chain carries Phosphoserine.

The protein belongs to the phosphohexose mutase family. Mg(2+) is required as a cofactor. Post-translationally, activated by phosphorylation.

It catalyses the reaction alpha-D-glucosamine 1-phosphate = D-glucosamine 6-phosphate. In terms of biological role, catalyzes the conversion of glucosamine-6-phosphate to glucosamine-1-phosphate. The sequence is that of Phosphoglucosamine mutase from Shewanella pealeana (strain ATCC 700345 / ANG-SQ1).